A 1682-amino-acid polypeptide reads, in one-letter code: Calmodulin-binding transcription activator 1 (1682 aa).

Positions lysine 63–cysteine 188 form a DNA-binding region, CG-1. The short motif at arginine 112–lysine 119 is the Nuclear localization signal element. 2 disordered regions span residues arginine 284–serine 375 and serine 599–aspartate 622. The span at glutamate 302–asparagine 327 shows a compositional bias: basic and acidic residues. Composition is skewed to polar residues over residues histidine 337–asparagine 367 and serine 599–phenylalanine 618. Positions aspartate 877 to lysine 955 constitute an IPT/TIG domain. Positions methionine 992–glycine 1020 are disordered. A compositionally biased stretch (gly residues) spans serine 1005 to glycine 1020. 3 ANK repeats span residues arginine 1066 to aspartate 1095, phenylalanine 1111 to isoleucine 1141, and leucine 1145 to alanine 1174. Disordered stretches follow at residues alanine 1217–lysine 1249 and leucine 1267–glutamine 1318. The span at serine 1268 to proline 1291 shows a compositional bias: polar residues. A compositionally biased stretch (low complexity) spans glutamate 1308–glutamine 1318. 3 consecutive IQ domains span residues glutamine 1549–leucine 1585, isoleucine 1586–leucine 1608, and isoleucine 1609–isoleucine 1631.

The protein belongs to the CAMTA family. In terms of assembly, may interact with calmodulin.

The protein resides in the nucleus. Its subcellular location is the cytoplasm. Transcriptional activator. In Mus musculus (Mouse), this protein is Calmodulin-binding transcription activator 1.